A 505-amino-acid polypeptide reads, in one-letter code: Flagellin (505 aa).

This sequence belongs to the bacterial flagellin family.

It is found in the secreted. The protein resides in the bacterial flagellum. Its function is as follows. Flagellin is the subunit protein which polymerizes to form the filaments of bacterial flagella. The polypeptide is Flagellin (fliC) (Salmonella muenchen).